The primary structure comprises 193 residues: Bcl-2-binding component 3 (193 aa).

Disordered regions lie at residues 1–31 (MARARQEGSSPEPVEGLARDSPRPFPLGRLM) and 71–131 (ALGG…VEEE). Residue Ser-10 is modified to Phosphoserine. Residues 137–151 (IGAQLRRMADDLNAQ) carry the BH3 motif.

The protein belongs to the Bcl-2 family. Interacts with MCL1 and BCL2A1. Interacts with BCL2 and BCL2L1/BCL-XL. Interacts (via BH3 domain) with NOL3 (via CARD domain); this interaction prevents BBC3 association with BCL2 and results in CASP8 activation.

It is found in the mitochondrion. Functionally, essential mediator of p53/TP53-dependent and p53/TP53-independent apoptosis. Promotes partial unfolding of BCL2L1 and dissociation of BCL2L1 from p53/TP53, releasing the bound p53/TP53 to induce apoptosis. Regulates ER stress-induced neuronal apoptosis. This chain is Bcl-2-binding component 3 (Bbc3), found in Mus musculus (Mouse).